A 202-amino-acid polypeptide reads, in one-letter code: Imidazoleglycerol-phosphate dehydratase (202 aa).

This sequence belongs to the imidazoleglycerol-phosphate dehydratase family.

It localises to the cytoplasm. The enzyme catalyses D-erythro-1-(imidazol-4-yl)glycerol 3-phosphate = 3-(imidazol-4-yl)-2-oxopropyl phosphate + H2O. Its pathway is amino-acid biosynthesis; L-histidine biosynthesis; L-histidine from 5-phospho-alpha-D-ribose 1-diphosphate: step 6/9. The chain is Imidazoleglycerol-phosphate dehydratase from Lactococcus lactis subsp. cremoris (strain SK11).